A 621-amino-acid chain; its full sequence is Phosphoenolpyruvate carboxykinase [GTP] (621 aa).

Residues Arg83 and 217-219 (YGG) each bind substrate. Lys226 and His245 together coordinate Mn(2+). Residue Ser267 coordinates substrate. 268–273 (MCGKTS) provides a ligand contact to GTP. Residue Cys269 is part of the active site. Mn(2+) is bound at residue Asp286. Substrate is bound at residue 381-383 (NAR). GTP-binding residues include Arg383 and Arg415.

Belongs to the phosphoenolpyruvate carboxykinase [GTP] family. It depends on Mn(2+) as a cofactor.

The protein localises to the cytoplasm. The catalysed reaction is oxaloacetate + GTP = phosphoenolpyruvate + GDP + CO2. It functions in the pathway carbohydrate biosynthesis; gluconeogenesis. Functionally, catalyzes the conversion of oxaloacetate (OAA) to phosphoenolpyruvate (PEP), the rate-limiting step in the metabolic pathway that produces glucose from lactate and other precursors derived from the citric acid cycle. The polypeptide is Phosphoenolpyruvate carboxykinase [GTP] (Pyrococcus horikoshii (strain ATCC 700860 / DSM 12428 / JCM 9974 / NBRC 100139 / OT-3)).